A 375-amino-acid polypeptide reads, in one-letter code: Chaperone protein DnaJ (375 aa).

Residues 4 to 69 (DLYETLGVQK…QKRAAYDRYG (66 aa)) form the J domain. The CR-type zinc-finger motif lies at 133-211 (GKTAQIRVPT…CHGQGRVVEE (79 aa)). Zn(2+) is bound by residues cysteine 146, cysteine 149, cysteine 163, cysteine 166, cysteine 185, cysteine 188, cysteine 199, and cysteine 202. CXXCXGXG motif repeat units lie at residues 146-153 (CDVCTGTG), 163-170 (CGTCQGTG), 185-192 (CPTCGGRG), and 199-206 (CTKCHGQG).

The protein belongs to the DnaJ family. As to quaternary structure, homodimer. Requires Zn(2+) as cofactor.

The protein localises to the cytoplasm. Functionally, participates actively in the response to hyperosmotic and heat shock by preventing the aggregation of stress-denatured proteins and by disaggregating proteins, also in an autonomous, DnaK-independent fashion. Unfolded proteins bind initially to DnaJ; upon interaction with the DnaJ-bound protein, DnaK hydrolyzes its bound ATP, resulting in the formation of a stable complex. GrpE releases ADP from DnaK; ATP binding to DnaK triggers the release of the substrate protein, thus completing the reaction cycle. Several rounds of ATP-dependent interactions between DnaJ, DnaK and GrpE are required for fully efficient folding. Also involved, together with DnaK and GrpE, in the DNA replication of plasmids through activation of initiation proteins. In Sinorhizobium medicae (strain WSM419) (Ensifer medicae), this protein is Chaperone protein DnaJ.